Reading from the N-terminus, the 817-residue chain is Nuclear hormone receptor family member nhr-48 (817 aa).

A disordered region spans residues 49–91; it reads YNDDKDDPFYEDEGSGGGTSGGGKKSSRKRANTTSSSGGNEKE. A compositionally biased stretch (acidic residues) spans 52–62; that stretch reads DKDDPFYEDEG. Positions 63 to 72 are enriched in gly residues; that stretch reads SGGGTSGGGK. The nuclear receptor DNA-binding region spans 97-172; sequence NKVCRVCGDK…VGMKKEWIMS (76 aa). 2 consecutive NR C4-type zinc fingers follow at residues 100–120 and 136–155; these read CRVC…CESC and CPFN…CQRC. Residues 202–212 are compositionally biased toward acidic residues; the sequence is ACMEDESENSY. 2 disordered regions span residues 202–221 and 258–284; these read ACME…PSHQ and MNFY…SSQL. Residues 273–284 show a composition bias toward polar residues; the sequence is LPSNSCASSSQL.

This sequence belongs to the nuclear hormone receptor family.

The protein resides in the nucleus. Its function is as follows. Orphan nuclear receptor. The sequence is that of Nuclear hormone receptor family member nhr-48 (nhr-48) from Caenorhabditis elegans.